The sequence spans 118 residues: Large ribosomal subunit protein bL20 (118 aa).

It belongs to the bacterial ribosomal protein bL20 family.

Functionally, binds directly to 23S ribosomal RNA and is necessary for the in vitro assembly process of the 50S ribosomal subunit. It is not involved in the protein synthesizing functions of that subunit. This is Large ribosomal subunit protein bL20 from Lactobacillus delbrueckii subsp. bulgaricus (strain ATCC BAA-365 / Lb-18).